A 416-amino-acid chain; its full sequence is Glutamyl-tRNA reductase (416 aa).

Residues 49–52 (TCNR), serine 105, 110–112 (ETQ), and glutamine 116 contribute to the substrate site. The active-site Nucleophile is cysteine 50. Position 185–190 (185–190 (GAGEMI)) interacts with NADP(+).

It belongs to the glutamyl-tRNA reductase family. Homodimer.

It catalyses the reaction (S)-4-amino-5-oxopentanoate + tRNA(Glu) + NADP(+) = L-glutamyl-tRNA(Glu) + NADPH + H(+). It functions in the pathway porphyrin-containing compound metabolism; protoporphyrin-IX biosynthesis; 5-aminolevulinate from L-glutamyl-tRNA(Glu): step 1/2. Catalyzes the NADPH-dependent reduction of glutamyl-tRNA(Glu) to glutamate 1-semialdehyde (GSA). This chain is Glutamyl-tRNA reductase, found in Thiobacillus denitrificans (strain ATCC 25259 / T1).